A 577-amino-acid polypeptide reads, in one-letter code: Aspartate--tRNA(Asp/Asn) ligase (577 aa).

E171 contacts L-aspartate. Residues 195-198 (QLFK) form an aspartate region. Residue R217 coordinates L-aspartate. ATP-binding positions include 217-219 (RDE) and Q226. H444 serves as a coordination point for L-aspartate. E474 lines the ATP pocket. R481 provides a ligand contact to L-aspartate. 526 to 529 (GFDR) contributes to the ATP binding site.

The protein belongs to the class-II aminoacyl-tRNA synthetase family. Type 1 subfamily. As to quaternary structure, homodimer.

It is found in the cytoplasm. It carries out the reaction tRNA(Asx) + L-aspartate + ATP = L-aspartyl-tRNA(Asx) + AMP + diphosphate. Its function is as follows. Aspartyl-tRNA synthetase with relaxed tRNA specificity since it is able to aspartylate not only its cognate tRNA(Asp) but also tRNA(Asn). Reaction proceeds in two steps: L-aspartate is first activated by ATP to form Asp-AMP and then transferred to the acceptor end of tRNA(Asp/Asn). The protein is Aspartate--tRNA(Asp/Asn) ligase of Helicobacter pylori (strain P12).